The following is a 196-amino-acid chain: ATP-dependent Clp protease proteolytic subunit (196 aa).

S96 functions as the Nucleophile in the catalytic mechanism. Residue H121 is part of the active site.

The protein belongs to the peptidase S14 family. In terms of assembly, fourteen ClpP subunits assemble into 2 heptameric rings which stack back to back to give a disk-like structure with a central cavity, resembling the structure of eukaryotic proteasomes.

Its subcellular location is the cytoplasm. The catalysed reaction is Hydrolysis of proteins to small peptides in the presence of ATP and magnesium. alpha-casein is the usual test substrate. In the absence of ATP, only oligopeptides shorter than five residues are hydrolyzed (such as succinyl-Leu-Tyr-|-NHMec, and Leu-Tyr-Leu-|-Tyr-Trp, in which cleavage of the -Tyr-|-Leu- and -Tyr-|-Trp bonds also occurs).. In terms of biological role, cleaves peptides in various proteins in a process that requires ATP hydrolysis. Has a chymotrypsin-like activity. Plays a major role in the degradation of misfolded proteins. The sequence is that of ATP-dependent Clp protease proteolytic subunit from Streptococcus pneumoniae (strain 70585).